Here is a 390-residue protein sequence, read N- to C-terminus: MAVGIENTIEEARFVEQARNFDIQRVIVKIGSSLLTNNGRGLDRTAIYEWAKQIAQLHKQGVEVLLVSSGAVAEGVVRMNLEERPKKLAALQACASVGQMGLIETWWSALIQYGIQSSQLLLTHDDLSNRSRYLNTTGALTQLLEWRVLPVINENDTITIDEIKFGDNDTLGAMAAAMVNADLYIILTDQEGVFTDNPRNNPHARMIRQERAMADYLFDIAGDGGKLGRGGMLTKIRAGRLAAMGGCPTVIVSGAIDDVITRVVSGEAVGTLLTTNDQDKIIARKQWLAAHLRMSGSLIVDAGAAKAVVEHQKSLLPVGVSEVRGDFDEGDVVEIVHQDTGERIAVGQVNFSSRDACRVARERTEQFDRILGNNEERVVMVHRDNLALTM.

Lys29 serves as a coordination point for ATP. Ser69, Asp156, and Asn168 together coordinate substrate. 188-189 (TD) contributes to the ATP binding site. One can recognise a PUA domain in the interval 295–374 (SGSLIVDAGA…EQFDRILGNN (80 aa)).

This sequence belongs to the glutamate 5-kinase family.

Its subcellular location is the cytoplasm. It catalyses the reaction L-glutamate + ATP = L-glutamyl 5-phosphate + ADP. Its pathway is amino-acid biosynthesis; L-proline biosynthesis; L-glutamate 5-semialdehyde from L-glutamate: step 1/2. In terms of biological role, catalyzes the transfer of a phosphate group to glutamate to form L-glutamate 5-phosphate. This chain is Glutamate 5-kinase, found in Psychrobacter cryohalolentis (strain ATCC BAA-1226 / DSM 17306 / VKM B-2378 / K5).